The primary structure comprises 30 residues: NADH-ubiquinone oxidoreductase 18 kDa subunit (30 aa).

As to quaternary structure, complex I is composed of about 45 different subunits.

The protein localises to the mitochondrion inner membrane. The catalysed reaction is a ubiquinone + NADH + 5 H(+)(in) = a ubiquinol + NAD(+) + 4 H(+)(out). Functionally, transfer of electrons from NADH to the respiratory chain. The immediate electron acceptor for the enzyme is believed to be ubiquinone. In Solanum tuberosum (Potato), this protein is NADH-ubiquinone oxidoreductase 18 kDa subunit.